We begin with the raw amino-acid sequence, 344 residues long: DNA polymerase III subunit delta (344 aa).

The protein belongs to the DNA polymerase HolA subunit family. DNA polymerase III contains a core (composed of alpha, epsilon and theta chains) that associates with a tau subunit. This core dimerizes to form the POLIII' complex. PolIII' associates with the gamma complex (composed of gamma, delta, delta', psi and chi chains) and with the beta chain to form the complete DNA polymerase III complex.

The catalysed reaction is DNA(n) + a 2'-deoxyribonucleoside 5'-triphosphate = DNA(n+1) + diphosphate. DNA polymerase III is a complex, multichain enzyme responsible for most of the replicative synthesis in bacteria. This DNA polymerase also exhibits 3' to 5' exonuclease activity. The delta subunit seems to interact with the gamma subunit to transfer the beta subunit on the DNA. This chain is DNA polymerase III subunit delta (holA), found in Haemophilus influenzae (strain ATCC 51907 / DSM 11121 / KW20 / Rd).